The following is a 178-amino-acid chain: Large ribosomal subunit protein eL20w (178 aa).

Belongs to the eukaryotic ribosomal protein eL20 family.

In Arabidopsis thaliana (Mouse-ear cress), this protein is Large ribosomal subunit protein eL20w (RPL18AD).